The chain runs to 1171 residues: 7,8-linoleate diol synthase (1171 aa).

Residues 1 to 22 (MASSSSSGSSTRSSSPSDPPSS) are compositionally biased toward low complexity. Residues 1-56 (MASSSSSGSSTRSSSPSDPPSSFFQKLGAFLGLFSKPQPPRPDYPHAPGNSAREEQ) are disordered. The fatty acid alpha-dioxygenase stretch occupies residues 114–457 (TDGLITGLWE…DGSFEDEGLI (344 aa)). Histidine 213 contacts heme b. Ca(2+) contacts are provided by aspartate 214, serine 229, tyrosine 231, aspartate 233, and serine 235. The active site involves tyrosine 385. Position 388 (histidine 388) interacts with heme b. The segment at 675–1171 (KILNNQKDFK…PMNMKIRWDD (497 aa)) is epoxy alcohol synthase. Residues 873–900 (GLANGGANGHANGNANGHTNGNGIHQNG) are disordered. Positions 881–895 (GHANGNANGHTNGNG) are enriched in low complexity. Cysteine 1089 lines the heme pocket.

It in the N-terminal section; belongs to the peroxidase family. This sequence in the C-terminal section; belongs to the cytochrome P450 family. In terms of assembly, homotetramer. Heme b serves as cofactor. Requires Ca(2+) as cofactor. It depends on heme as a cofactor.

The enzyme catalyses (9Z,12Z)-octadecadienoate + O2 = (8R,9Z,12Z)-8-hydroperoxyoctadeca-9,12-dienoate. It carries out the reaction (8R,9Z,12Z)-8-hydroperoxyoctadeca-9,12-dienoate = (7S,8S,9Z,12Z)-7,8-dihydroxyoctadeca-9,12-dienoate. Functionally, 7,8-linoleate diol synthase is a bifunctional enzyme that converts linoleic acid (18:2n-6) into 8-hydroperoxy-8(E),12(Z)-octadecadienoic acid (8-HPODE) and then catalyzes the isomerization of the resulting hydroperoxide to 7,8-dihydroxy-9(Z),12(Z)-octadecadienoic acid (7,8-DiHODE). In Pyricularia oryzae (strain 70-15 / ATCC MYA-4617 / FGSC 8958) (Rice blast fungus), this protein is 7,8-linoleate diol synthase.